The chain runs to 624 residues: DNA mismatch repair protein MutL (624 aa).

Residues Gly336–Arg357 form a disordered region. The segment covering Asp344 to His353 has biased composition (low complexity).

It belongs to the DNA mismatch repair MutL/HexB family.

In terms of biological role, this protein is involved in the repair of mismatches in DNA. It is required for dam-dependent methyl-directed DNA mismatch repair. May act as a 'molecular matchmaker', a protein that promotes the formation of a stable complex between two or more DNA-binding proteins in an ATP-dependent manner without itself being part of a final effector complex. The sequence is that of DNA mismatch repair protein MutL from Chlorobium phaeobacteroides (strain BS1).